A 267-amino-acid polypeptide reads, in one-letter code: MSDNFVSFGEQGAQLTYGSYLRLPQLLEAQHLESDPPAHDELLFITIHQVYELWFKQLLHEVSAARDAMLGGEAGGRLWWAQHLLTRVHVIERVLVQQIDVLETMTPQEFLEFRQRLAPASGFQSVQFRELEFLSGAKDPAYLERFRGITPAEKARLDARLSEPTLWDAFLAMLRSFGFAADSDAEVSAALRTAAHDRTRYAVVWALSEGLLQHDELAANWRARHVVMVERMIGSKSGTGGSSGSSYLRSRLPVQYYPLLWGLRSEL.

Substrate-binding positions include 44 to 48 and Arg-114; that span reads FITIH. Residue His-225 participates in heme binding. Thr-239 contributes to the substrate binding site.

The protein belongs to the tryptophan 2,3-dioxygenase family. In terms of assembly, homotetramer. The cofactor is heme.

It carries out the reaction L-tryptophan + O2 = N-formyl-L-kynurenine. It functions in the pathway amino-acid degradation; L-tryptophan degradation via kynurenine pathway; L-kynurenine from L-tryptophan: step 1/2. Its function is as follows. Heme-dependent dioxygenase that catalyzes the oxidative cleavage of the L-tryptophan (L-Trp) pyrrole ring and converts L-tryptophan to N-formyl-L-kynurenine. Catalyzes the oxidative cleavage of the indole moiety. The protein is Tryptophan 2,3-dioxygenase of Nocardioides sp. (strain ATCC BAA-499 / JS614).